The sequence spans 324 residues: o-succinylbenzoate synthase (324 aa).

Residue Lys135 is the Proton donor of the active site. 3 residues coordinate Mg(2+): Asp163, Glu192, and Asp215. Lys237 acts as the Proton acceptor in catalysis.

It belongs to the mandelate racemase/muconate lactonizing enzyme family. MenC type 1 subfamily. Requires a divalent metal cation as cofactor.

The catalysed reaction is (1R,6R)-6-hydroxy-2-succinyl-cyclohexa-2,4-diene-1-carboxylate = 2-succinylbenzoate + H2O. It participates in quinol/quinone metabolism; 1,4-dihydroxy-2-naphthoate biosynthesis; 1,4-dihydroxy-2-naphthoate from chorismate: step 4/7. It functions in the pathway quinol/quinone metabolism; menaquinone biosynthesis. Functionally, converts 2-succinyl-6-hydroxy-2,4-cyclohexadiene-1-carboxylate (SHCHC) to 2-succinylbenzoate (OSB). The sequence is that of o-succinylbenzoate synthase from Aliivibrio fischeri (strain ATCC 700601 / ES114) (Vibrio fischeri).